The sequence spans 768 residues: Solute carrier family 45 member 4 (768 aa).

The disordered stretch occupies residues 1–32 (MKMAPQNADPESMQVQELSVPLPDPQKAGGAE). A run of 6 helical transmembrane segments spans residues 63 to 83 (EFCY…IGLP), 86 to 106 (YYSL…PLIG), 123 to 143 (ILAL…GSAI), 155 to 175 (PIGI…ADAT), 196 to 216 (LNIH…LGGL), and 233 to 253 (VLFF…LFSI). Disordered stretches follow at residues 259–284 (SPQQ…PAFP) and 379–419 (NEAK…RHAF). 2 positions are modified to phosphoserine: S424 and S454. The tract at residues 460-489 (DMQKRQRQHRHRNQSGATTSSGDTESEEGE) is disordered. A compositionally biased stretch (low complexity) spans 473-482 (QSGATTSSGD). S485 carries the phosphoserine modification. 6 helical membrane passes run 518-538 (TWFS…QVIF), 560-580 (MGCW…ALLQ), 592-612 (VIYV…AMFP), 614-634 (VYVA…ISYC), 666-686 (ILSC…GGVV), and 695-715 (IPMV…FLVI). The segment at 726–768 (EQKGLSSPLAGEGRAGGNSEKPTVLKLTRKEGLQGPVETESVV) is disordered. S732 is modified (phosphoserine).

Belongs to the glycoside-pentoside-hexuronide (GPH) cation symporter transporter (TC 2.A.2) family.

Its subcellular location is the membrane. The enzyme catalyses sucrose(out) + H(+)(out) = sucrose(in) + H(+)(in). Functionally, proton-associated sucrose transporter. May be able to transport also glucose and fructose. This chain is Solute carrier family 45 member 4, found in Homo sapiens (Human).